Here is a 236-residue protein sequence, read N- to C-terminus: MAFSIKMRASKGDKHISGAETIVMEKENIENITAGYIKRALEHELGAPDFINIKIDKINKKDIIYIDALPIKTINCKNKEDARRVAKNLLKNEGISDKLIEKSFKIIDDGGMRGAPILNLNGERLEPDKERGVRVKNISTTEELKEKILKNNIGTDRTVDAIAIASKVINLGVIAELCTSDNNSYTTGYVATKNGYFRITNLKQENENGGRVFFVKNDTNIEDLIYKLENKPYIIK.

It belongs to the BioW family. In terms of assembly, homodimer. Mg(2+) is required as a cofactor.

It carries out the reaction heptanedioate + ATP + CoA = 6-carboxyhexanoyl-CoA + AMP + diphosphate. The protein operates within metabolic intermediate metabolism; pimeloyl-CoA biosynthesis; pimeloyl-CoA from pimelate: step 1/1. Functionally, catalyzes the transformation of pimelate into pimeloyl-CoA with concomitant hydrolysis of ATP to AMP. This is 6-carboxyhexanoate--CoA ligase from Methanococcus aeolicus (strain ATCC BAA-1280 / DSM 17508 / OCM 812 / Nankai-3).